We begin with the raw amino-acid sequence, 399 residues long: Pyridinium-3,5-bisthiocarboxylic acid mononucleotide nickel insertion protein (399 aa).

Belongs to the LarC family.

The catalysed reaction is Ni(II)-pyridinium-3,5-bisthiocarboxylate mononucleotide = pyridinium-3,5-bisthiocarboxylate mononucleotide + Ni(2+). Involved in the biosynthesis of a nickel-pincer cofactor ((SCS)Ni(II) pincer complex). Binds Ni(2+), and functions in nickel delivery to pyridinium-3,5-bisthiocarboxylic acid mononucleotide (P2TMN), to form the mature cofactor. Is thus probably required for the activation of nickel-pincer cofactor-dependent enzymes. This is Pyridinium-3,5-bisthiocarboxylic acid mononucleotide nickel insertion protein from Clostridium kluyveri (strain ATCC 8527 / DSM 555 / NBRC 12016 / NCIMB 10680 / K1).